The sequence spans 162 residues: UPF0303 protein RL3365 (162 aa).

This sequence belongs to the UPF0303 family.

The sequence is that of UPF0303 protein RL3365 from Rhizobium johnstonii (strain DSM 114642 / LMG 32736 / 3841) (Rhizobium leguminosarum bv. viciae).